Here is a 552-residue protein sequence, read N- to C-terminus: Chaperonin GroEL 3 (552 aa).

Residues 30–33, Lys-51, 87–91, Gly-415, and Asp-495 contribute to the ATP site; these read TLGP and DGTTT.

It belongs to the chaperonin (HSP60) family. As to quaternary structure, forms a cylinder of 14 subunits composed of two heptameric rings stacked back-to-back. Interacts with the co-chaperonin GroES.

Its subcellular location is the cytoplasm. It catalyses the reaction ATP + H2O + a folded polypeptide = ADP + phosphate + an unfolded polypeptide.. Its function is as follows. Together with its co-chaperonin GroES, plays an essential role in assisting protein folding. The GroEL-GroES system forms a nano-cage that allows encapsulation of the non-native substrate proteins and provides a physical environment optimized to promote and accelerate protein folding. The sequence is that of Chaperonin GroEL 3 from Mesorhizobium japonicum (strain LMG 29417 / CECT 9101 / MAFF 303099) (Mesorhizobium loti (strain MAFF 303099)).